The following is a 360-amino-acid chain: Photosystem II protein D1 1 (360 aa).

The next 3 membrane-spanning stretches (helical) occupy residues 29–46, 118–133, and 142–156; these read YVGW…SATI, HFLI…EWEL, and WICI…AAAA. H118 is a chlorophyll a binding site. Residue Y126 coordinates pheophytin a. [CaMn4O5] cluster is bound by residues D170 and E189. A helical membrane pass occupies residues 197 to 218; sequence FHMLGVAGVFGGSLFSAMHGSL. H198 contributes to the chlorophyll a binding site. A quinone-binding positions include H215 and 264-265; that span reads SF. Position 215 (H215) interacts with Fe cation. H272 lines the Fe cation pocket. The chain crosses the membrane as a helical span at residues 274–288; the sequence is FLAAWPVIGIWFTAL. H332, E333, D342, and A344 together coordinate [CaMn4O5] cluster. Positions 345 to 360 are excised as a propeptide; that stretch reads GTESAPVAVGNADLNG.

The protein belongs to the reaction center PufL/M/PsbA/D family. PSII is composed of 1 copy each of membrane proteins PsbA, PsbB, PsbC, PsbD, PsbE, PsbF, PsbH, PsbI, PsbJ, PsbK, PsbL, PsbM, PsbT, PsbX, Psb30/Ycf12, peripheral proteins PsbO, CyanoQ (PsbQ), PsbU, PsbV and a large number of cofactors. It forms dimeric complexes. The D1/D2 heterodimer binds P680, chlorophylls that are the primary electron donor of PSII, and subsequent electron acceptors. It shares a non-heme iron and each subunit binds pheophytin, quinone, additional chlorophylls, carotenoids and lipids. D1 provides most of the ligands for the Mn4-Ca-O5 cluster of the oxygen-evolving complex (OEC). There is also a Cl(-1) ion associated with D1 and D2, which is required for oxygen evolution. The PSII complex binds additional chlorophylls, carotenoids and specific lipids. is required as a cofactor. In terms of processing, tyr-161 forms a radical intermediate that is referred to as redox-active TyrZ, YZ or Y-Z. Post-translationally, C-terminally processed by CtpA; processing is essential to allow assembly of the oxygen-evolving complex and thus photosynthetic growth.

It localises to the cell inner membrane. It carries out the reaction 2 a plastoquinone + 4 hnu + 2 H2O = 2 a plastoquinol + O2. In terms of biological role, photosystem II (PSII) is a light-driven water:plastoquinone oxidoreductase that uses light energy to abstract electrons from H(2)O, generating O(2) and a proton gradient subsequently used for ATP formation. It consists of a core antenna complex that captures photons, and an electron transfer chain that converts photonic excitation into a charge separation. The D1/D2 (PsbA/PsbD) reaction center heterodimer binds P680, the primary electron donor of PSII as well as several subsequent electron acceptors. This is Photosystem II protein D1 1 from Gloeobacter violaceus (strain ATCC 29082 / PCC 7421).